Reading from the N-terminus, the 282-residue chain is Fused uL13/uS9 ribosomal subunit protein (282 aa).

The large ribosomal subunit protein uL13 stretch occupies residues 1–141; sequence MLLMIINGEG…LGEISELLGA (141 aa). A small ribosomal subunit protein uS9 region spans residues 150 to 282; the sequence is MKKVIHTSGK…ARARRQKSYR (133 aa). Residues 259-282 are disordered; that stretch reads DPRRSEPKKYGGRGARARRQKSYR. Residues 273 to 282 are compositionally biased toward basic residues; sequence ARARRQKSYR.

The protein in the N-terminal section; belongs to the universal ribosomal protein uL13 family. It in the C-terminal section; belongs to the universal ribosomal protein uS9 family. L13 is part of the 50S ribosomal subunit. S9 is part of the 30S ribosomal subunit.

L13 protein is one of the early assembly proteins of the 50S ribosomal subunit, although it is not seen to bind rRNA by itself. It is important during the early stages of 50S assembly. The protein is Fused uL13/uS9 ribosomal subunit protein (rpl13/rps9) of Methanothermobacter thermautotrophicus (strain ATCC 29096 / DSM 1053 / JCM 10044 / NBRC 100330 / Delta H) (Methanobacterium thermoautotrophicum).